Consider the following 355-residue polypeptide: Methionine import ATP-binding protein MetN (355 aa).

In terms of domain architecture, ABC transporter spans 8–250 (LKNIDITFTQ…PQEDLTQEFI (243 aa)). ATP is bound at residue 42-49 (GYSGAGKS).

It belongs to the ABC transporter superfamily. Methionine importer (TC 3.A.1.24) family. In terms of assembly, the complex is composed of two ATP-binding proteins (MetN), two transmembrane proteins (MetI) and a solute-binding protein (MetQ).

Its subcellular location is the cell membrane. It catalyses the reaction L-methionine(out) + ATP + H2O = L-methionine(in) + ADP + phosphate + H(+). It carries out the reaction D-methionine(out) + ATP + H2O = D-methionine(in) + ADP + phosphate + H(+). Part of the ABC transporter complex MetNIQ involved in methionine import. Responsible for energy coupling to the transport system. This Streptococcus thermophilus (strain ATCC BAA-250 / LMG 18311) protein is Methionine import ATP-binding protein MetN.